A 475-amino-acid polypeptide reads, in one-letter code: Glutamate--tRNA ligase 1 (475 aa).

A 'HIGH' region motif is present at residues 11 to 21 (PSPTGYLHIGG). Residues 240–244 (KLSKR) carry the 'KMSKS' region motif. Position 243 (Lys243) interacts with ATP.

The protein belongs to the class-I aminoacyl-tRNA synthetase family. Glutamate--tRNA ligase type 1 subfamily. As to quaternary structure, monomer.

The protein resides in the cytoplasm. It catalyses the reaction tRNA(Glu) + L-glutamate + ATP = L-glutamyl-tRNA(Glu) + AMP + diphosphate. In terms of biological role, catalyzes the attachment of glutamate to tRNA(Glu) in a two-step reaction: glutamate is first activated by ATP to form Glu-AMP and then transferred to the acceptor end of tRNA(Glu). In Methylobacterium radiotolerans (strain ATCC 27329 / DSM 1819 / JCM 2831 / NBRC 15690 / NCIMB 10815 / 0-1), this protein is Glutamate--tRNA ligase 1.